The following is a 289-amino-acid chain: Glycerol facilitator-aquaporin gla (289 aa).

Transmembrane regions (helical) follow at residues 10-30 and 41-61; these read ITEF…VANV and SWMI…VAFG. Residues 68–70 carry the NPA 1 motif; that stretch reads NPA. 3 helical membrane passes run 87–107, 151–171, and 209–229; these read AQYI…IVMV, FLGS…FFGS, and MIAH…LGGP. Positions 235–237 match the NPA 2 motif; that stretch reads NPA. The chain crosses the membrane as a helical span at residues 264–284; sequence WYAWVPVLAPILASLAAVALF.

Belongs to the MIP/aquaporin (TC 1.A.8) family.

The protein resides in the cell membrane. Its function is as follows. Mixed channel protein that transports both water and glycerol. The chain is Glycerol facilitator-aquaporin gla (gla) from Lactococcus lactis subsp. cremoris (Streptococcus cremoris).